Here is a 201-residue protein sequence, read N- to C-terminus: Glycerol-3-phosphate acyltransferase (201 aa).

A run of 5 helical transmembrane segments spans residues 10–30 (ALILTGVLGYLLGSIPFGIVI), 59–79 (PAALATLLLDSGKGAIAVLIA), 87–107 (AAQLAAFTSFLGHLFPVWLGF), 116–136 (FLGTLLALAWPVGLACCLTWL), and 161–181 (ILLGYGQMAALGAVLAVLIFI).

The protein belongs to the PlsY family. Probably interacts with PlsX.

It localises to the cell inner membrane. The enzyme catalyses an acyl phosphate + sn-glycerol 3-phosphate = a 1-acyl-sn-glycero-3-phosphate + phosphate. Its pathway is lipid metabolism; phospholipid metabolism. Catalyzes the transfer of an acyl group from acyl-phosphate (acyl-PO(4)) to glycerol-3-phosphate (G3P) to form lysophosphatidic acid (LPA). This enzyme utilizes acyl-phosphate as fatty acyl donor, but not acyl-CoA or acyl-ACP. The chain is Glycerol-3-phosphate acyltransferase from Cereibacter sphaeroides (strain ATCC 17029 / ATH 2.4.9) (Rhodobacter sphaeroides).